The primary structure comprises 154 residues: MTQHDNISQIENIIEPAVRDLGYDLVDVELIMENQKWVLRVYIDHGKGIGLDDCELVSNSLDQLLDEHDPIPHSYVLEVSSPGAERPLKKKKDFVNFAGKKVQIKTYVKLDGRKNFKGKLLGLEDEHVVLETFNSGEVKIPLDKIAKANLLLEL.

The protein belongs to the RimP family.

The protein localises to the cytoplasm. Functionally, required for maturation of 30S ribosomal subunits. The chain is Ribosome maturation factor RimP from Natranaerobius thermophilus (strain ATCC BAA-1301 / DSM 18059 / JW/NM-WN-LF).